The chain runs to 592 residues: Putative amidase ARB_02965 (592 aa).

Positions methionine 1–alanine 21 are cleaved as a signal peptide. Asparagine 120 carries N-linked (GlcNAc...) asparagine glycosylation. Lysine 161 functions as the Charge relay system in the catalytic mechanism. Asparagine 217 carries N-linked (GlcNAc...) asparagine glycosylation. The Charge relay system role is filled by serine 242. Substrate contacts are provided by residues serine 242 and threonine 263–serine 266. Serine 266 acts as the Acyl-ester intermediate in catalysis. Residues asparagine 326, asparagine 430, and asparagine 528 are each glycosylated (N-linked (GlcNAc...) asparagine).

It belongs to the amidase family.

The protein localises to the secreted. The chain is Putative amidase ARB_02965 from Arthroderma benhamiae (strain ATCC MYA-4681 / CBS 112371) (Trichophyton mentagrophytes).